The following is a 435-amino-acid chain: Enolase (435 aa).

Residue Gln-163 participates in (2R)-2-phosphoglycerate binding. Glu-205 functions as the Proton donor in the catalytic mechanism. The Mg(2+) site is built by Asp-243, Glu-292, and Asp-319. 4 residues coordinate (2R)-2-phosphoglycerate: Lys-344, Arg-373, Ser-374, and Lys-395. The active-site Proton acceptor is Lys-344.

It belongs to the enolase family. In terms of assembly, homooctamer, a tetramer of homodimers. Requires Mg(2+) as cofactor.

It is found in the cytoplasm. Its subcellular location is the secreted. The protein resides in the cell surface. The protein localises to the cell wall. It catalyses the reaction (2R)-2-phosphoglycerate = phosphoenolpyruvate + H2O. It participates in carbohydrate degradation; glycolysis; pyruvate from D-glyceraldehyde 3-phosphate: step 4/5. In terms of biological role, catalyzes the reversible conversion of 2-phosphoglycerate (2-PG) into phosphoenolpyruvate (PEP). It is essential for the degradation of carbohydrates via glycolysis. Its function is as follows. 'Moonlights' as a plasminogen receptor. Binds plasminogen and more weakly plasmin when expressed on the bacterial cell surface; probably has more than one plasmin(ogen) binding site, may bind via Lys residues. Plasminogen binding potentially allows the bacterium to acquire surface-associated proteolytic activity, which in turn contributes to tissue invasion and virulence. This is Enolase from Streptococcus pyogenes serotype M6 (strain ATCC BAA-946 / MGAS10394).